A 235-amino-acid polypeptide reads, in one-letter code: Sugar fermentation stimulation protein homolog (235 aa).

This sequence belongs to the SfsA family.

The chain is Sugar fermentation stimulation protein homolog from Aliivibrio salmonicida (strain LFI1238) (Vibrio salmonicida (strain LFI1238)).